Reading from the N-terminus, the 105-residue chain is ATP synthase F(0) complex subunit a (105 aa).

The next 3 membrane-spanning stretches (helical) occupy residues 14–34 (EGTP…SLFI), 47–67 (LTAG…LLPM), and 72–92 (AILT…VAMI).

It belongs to the ATPase A chain family. Component of the ATP synthase complex composed at least of ATP5F1A/subunit alpha, ATP5F1B/subunit beta, ATP5MC1/subunit c (homooctomer), MT-ATP6/subunit a, MT-ATP8/subunit 8, ATP5ME/subunit e, ATP5MF/subunit f, ATP5MG/subunit g, ATP5MK/subunit k, ATP5MJ/subunit j, ATP5F1C/subunit gamma, ATP5F1D/subunit delta, ATP5F1E/subunit epsilon, ATP5PF/subunit F6, ATP5PB/subunit b, ATP5PD/subunit d, ATP5PO/subunit OSCP. ATP synthase complex consists of a soluble F(1) head domain (subunits alpha(3) and beta(3)) - the catalytic core - and a membrane F(0) domain - the membrane proton channel (subunits c, a, 8, e, f, g, k and j). These two domains are linked by a central stalk (subunits gamma, delta, and epsilon) rotating inside the F1 region and a stationary peripheral stalk (subunits F6, b, d, and OSCP). Interacts with DNAJC30; interaction is direct.

The protein localises to the mitochondrion inner membrane. The catalysed reaction is H(+)(in) = H(+)(out). Its function is as follows. Subunit a, of the mitochondrial membrane ATP synthase complex (F(1)F(0) ATP synthase or Complex V) that produces ATP from ADP in the presence of a proton gradient across the membrane which is generated by electron transport complexes of the respiratory chain. ATP synthase complex consist of a soluble F(1) head domain - the catalytic core - and a membrane F(1) domain - the membrane proton channel. These two domains are linked by a central stalk rotating inside the F(1) region and a stationary peripheral stalk. During catalysis, ATP synthesis in the catalytic domain of F(1) is coupled via a rotary mechanism of the central stalk subunits to proton translocation. With the subunit c (ATP5MC1), forms the proton-conducting channel in the F(0) domain, that contains two crucial half-channels (inlet and outlet) that facilitate proton movement from the mitochondrial intermembrane space (IMS) into the matrix. Protons are taken up via the inlet half-channel and released through the outlet half-channel, following a Grotthuss mechanism. The protein is ATP synthase F(0) complex subunit a of Salmo trutta (Brown trout).